Consider the following 181-residue polypeptide: Probable toxin TacT (181 aa).

This sequence belongs to the acetyltransferase family. In terms of assembly, forms a complex with cognate antitoxin TacA.

Functionally, probable toxin component of a type II toxin-antitoxin (TA) system. Might acetylate tRNA and inhibit translation. Should be neutralized by cognate antitoxin TacA (y4aR). The chain is Probable toxin TacT from Sinorhizobium fredii (strain NBRC 101917 / NGR234).